Consider the following 101-residue polypeptide: MRLMIIFDLPVETSEERKEYRKFRKNLINEGFIMIQYSVYVRVCVNKKSAEFTEKRIESFLPSKGVVQSLILTEKQYNDMHFLLGKKIKEVRNSAERTIIL.

Asp-8 contributes to the Mg(2+) binding site.

Belongs to the CRISPR-associated endoribonuclease Cas2 protein family. As to quaternary structure, homodimer, forms a heterotetramer with a Cas1 homodimer. Mg(2+) is required as a cofactor.

In terms of biological role, CRISPR (clustered regularly interspaced short palindromic repeat), is an adaptive immune system that provides protection against mobile genetic elements (viruses, transposable elements and conjugative plasmids). CRISPR clusters contain sequences complementary to antecedent mobile elements and target invading nucleic acids. CRISPR clusters are transcribed and processed into CRISPR RNA (crRNA). Functions as a ssRNA-specific endoribonuclease. Involved in the integration of spacer DNA into the CRISPR cassette. This Ligilactobacillus salivarius (strain UCC118) (Lactobacillus salivarius) protein is CRISPR-associated endoribonuclease Cas2.